The sequence spans 242 residues: UPF0157 protein PA4798 (242 aa).

Positions 215–242 (AGAESTPGGPADTAYFESLRSRVSKPQD) are disordered.

It belongs to the UPF0157 (GrpB) family.

The protein is UPF0157 protein PA4798 of Pseudomonas aeruginosa (strain ATCC 15692 / DSM 22644 / CIP 104116 / JCM 14847 / LMG 12228 / 1C / PRS 101 / PAO1).